Here is an 82-residue protein sequence, read N- to C-terminus: Small ribosomal subunit protein bS16 (82 aa).

Belongs to the bacterial ribosomal protein bS16 family.

This chain is Small ribosomal subunit protein bS16, found in Pectobacterium atrosepticum (strain SCRI 1043 / ATCC BAA-672) (Erwinia carotovora subsp. atroseptica).